The chain runs to 460 residues: 3-isopropylmalate dehydratase large subunit (460 aa).

[4Fe-4S] cluster is bound by residues C338, C398, and C401.

Belongs to the aconitase/IPM isomerase family. LeuC type 1 subfamily. As to quaternary structure, heterodimer of LeuC and LeuD. [4Fe-4S] cluster is required as a cofactor.

The enzyme catalyses (2R,3S)-3-isopropylmalate = (2S)-2-isopropylmalate. It functions in the pathway amino-acid biosynthesis; L-leucine biosynthesis; L-leucine from 3-methyl-2-oxobutanoate: step 2/4. In terms of biological role, catalyzes the isomerization between 2-isopropylmalate and 3-isopropylmalate, via the formation of 2-isopropylmaleate. This is 3-isopropylmalate dehydratase large subunit from Streptococcus gordonii (strain Challis / ATCC 35105 / BCRC 15272 / CH1 / DL1 / V288).